A 468-amino-acid polypeptide reads, in one-letter code: UDP-N-acetylmuramate--L-alanine ligase (468 aa).

114 to 120 contributes to the ATP binding site; it reads GTHGKTT.

It belongs to the MurCDEF family.

The protein resides in the cytoplasm. It catalyses the reaction UDP-N-acetyl-alpha-D-muramate + L-alanine + ATP = UDP-N-acetyl-alpha-D-muramoyl-L-alanine + ADP + phosphate + H(+). The protein operates within cell wall biogenesis; peptidoglycan biosynthesis. Its function is as follows. Cell wall formation. The polypeptide is UDP-N-acetylmuramate--L-alanine ligase (Methylorubrum extorquens (strain PA1) (Methylobacterium extorquens)).